The primary structure comprises 257 residues: Snake venom serine protease KN3 (257 aa).

A signal peptide spans 1-18; that stretch reads MVLIRVLANLLILQLSYA. A propeptide spanning residues 19–24 is cleaved from the precursor; the sequence is QKSSKL. The region spanning 25 to 248 is the Peptidase S1 domain; it reads VVGGDECNIN…HLDWIKSIIA (224 aa). 6 disulfides stabilise this stretch: Cys31–Cys162, Cys49–Cys65, Cys97–Cys255, Cys141–Cys209, Cys173–Cys188, and Cys199–Cys224. Catalysis depends on charge relay system residues His64 and Asp109. N-linked (GlcNAc...) asparagine glycosylation is found at Asn120, Asn121, and Asn164. Residue Ser203 is the Charge relay system of the active site.

It belongs to the peptidase S1 family. Snake venom subfamily. As to quaternary structure, monomer. In terms of tissue distribution, expressed by the venom gland.

It localises to the secreted. In terms of biological role, snake venom serine protease that may act in the hemostasis system of the prey. The polypeptide is Snake venom serine protease KN3 (Trimeresurus stejnegeri (Chinese green tree viper)).